The chain runs to 245 residues: Nicotinamide/nicotinic acid mononucleotide adenylyltransferase 3 (245 aa).

NAD(+) contacts are provided by Ser-14 and Phe-15. ATP is bound by residues His-22 and Lys-56. 4 residues coordinate NAD(+): Trp-90, Thr-93, Gly-134, and Asp-136. Lys-139 contributes to the ATP binding site. The NAD(+) site is built by Leu-146, Trp-147, Arg-166, and Asn-197. Residue 202-205 (TYVR) participates in ATP binding.

Belongs to the eukaryotic NMN adenylyltransferase family. As to quaternary structure, homotetramer. Mg(2+) serves as cofactor.

It is found in the mitochondrion. The catalysed reaction is beta-nicotinamide D-ribonucleotide + ATP + H(+) = diphosphate + NAD(+). It catalyses the reaction nicotinate beta-D-ribonucleotide + ATP + H(+) = deamido-NAD(+) + diphosphate. The protein operates within cofactor biosynthesis; NAD(+) biosynthesis; NAD(+) from nicotinamide D-ribonucleotide: step 1/1. It functions in the pathway cofactor biosynthesis; NAD(+) biosynthesis; deamido-NAD(+) from nicotinate D-ribonucleotide: step 1/1. Its activity is regulated as follows. Activity is strongly inhibited by galotannin. Inhibited by P1-(adenosine-5')-P4-(nicotinic-acid-riboside-5')-tetraphosphate (Nap4AD). Its function is as follows. Catalyzes the formation of NAD(+) from nicotinamide mononucleotide (NMN) and ATP. Can also use the deamidated form; nicotinic acid mononucleotide (NaMN) as substrate with the same efficiency. Can use triazofurin monophosphate (TrMP) as substrate. Can also use GTP and ITP as nucleotide donors. Also catalyzes the reverse reaction, i.e. the pyrophosphorolytic cleavage of NAD(+). For the pyrophosphorolytic activity, can use NAD(+), NADH, NaAD, nicotinic acid adenine dinucleotide phosphate (NHD), nicotinamide guanine dinucleotide (NGD) as substrates. Fails to cleave phosphorylated dinucleotides NADP(+), NADPH and NaADP(+). Protects against axonal degeneration following injury. May be involved in the maintenance of axonal integrity. Also functions as a stress-response chaperone protein that prevents toxic aggregation of proteins; this function may be independent of its NAD(+) synthesis activity. The chain is Nicotinamide/nicotinic acid mononucleotide adenylyltransferase 3 from Mus musculus (Mouse).